The sequence spans 158 residues: Crossover junction endodeoxyribonuclease RuvC (158 aa).

Catalysis depends on residues Asp7, Glu67, and Asp140. Mg(2+) is bound by residues Asp7, Glu67, and Asp140.

Belongs to the RuvC family. As to quaternary structure, homodimer which binds Holliday junction (HJ) DNA. The HJ becomes 2-fold symmetrical on binding to RuvC with unstacked arms; it has a different conformation from HJ DNA in complex with RuvA. In the full resolvosome a probable DNA-RuvA(4)-RuvB(12)-RuvC(2) complex forms which resolves the HJ. The cofactor is Mg(2+).

It localises to the cytoplasm. It carries out the reaction Endonucleolytic cleavage at a junction such as a reciprocal single-stranded crossover between two homologous DNA duplexes (Holliday junction).. The RuvA-RuvB-RuvC complex processes Holliday junction (HJ) DNA during genetic recombination and DNA repair. Endonuclease that resolves HJ intermediates. Cleaves cruciform DNA by making single-stranded nicks across the HJ at symmetrical positions within the homologous arms, yielding a 5'-phosphate and a 3'-hydroxyl group; requires a central core of homology in the junction. The consensus cleavage sequence is 5'-(A/T)TT(C/G)-3'. Cleavage occurs on the 3'-side of the TT dinucleotide at the point of strand exchange. HJ branch migration catalyzed by RuvA-RuvB allows RuvC to scan DNA until it finds its consensus sequence, where it cleaves and resolves the cruciform DNA. The sequence is that of Crossover junction endodeoxyribonuclease RuvC from Dictyoglomus thermophilum (strain ATCC 35947 / DSM 3960 / H-6-12).